We begin with the raw amino-acid sequence, 303 residues long: uncharacterized protein (303 aa).

The 60-residue stretch at 15–74 folds into the S4 RNA-binding domain; it reads ERIDKFLASTENDWSRTQVQQWVKDGQVVVNGSAVKANYKIQPGDQVTVTVPEPEALDVL. Residue aspartate 138 is part of the active site.

This sequence belongs to the pseudouridine synthase RluA family.

It catalyses the reaction a uridine in RNA = a pseudouridine in RNA. This is an uncharacterized protein from Bacillus subtilis (strain 168).